The chain runs to 118 residues: Acidic elicitin A1 (118 aa).

Positions 1–20 are cleaved as a signal peptide; it reads MNFRALFAATVAALVGSTSA. Intrachain disulfides connect C23–C91, C47–C76, and C71–C115.

It belongs to the elicitin family.

It is found in the secreted. Its function is as follows. Induces local and distal defense responses (incompatible hypersensitive reaction) in plants from the solanaceae and cruciferae families. Elicits leaf necrosis and causes the accumulation of pathogenesis-related proteins. Might interact with the lipidic molecules of the plasma membrane. The protein is Acidic elicitin A1 (B14) of Phytophthora cryptogea.